The primary structure comprises 203 residues: Proline-rich protein 1 (203 aa).

The first 20 residues, Met-1–Gly-20, serve as a signal peptide directing secretion.

Component of the acid-insoluble and acid-soluble organic matrix of calcified layers of the shell (at protein level).

It is found in the secreted. The chain is Proline-rich protein 1 from Lottia gigantea (Giant owl limpet).